The sequence spans 281 residues: DegV domain-containing protein spr0652 (281 aa).

The 278-residue stretch at 3–280 (WKIIADSGCD…EGGLLMGYEI (278 aa)) folds into the DegV domain. Hexadecanoate-binding residues include serine 63 and serine 91.

In terms of biological role, may bind long-chain fatty acids, such as palmitate, and may play a role in lipid transport or fatty acid metabolism. This is DegV domain-containing protein spr0652 from Streptococcus pneumoniae (strain ATCC BAA-255 / R6).